A 342-amino-acid polypeptide reads, in one-letter code: Phosphate acyltransferase (342 aa).

Belongs to the PlsX family. Homodimer. Probably interacts with PlsY.

It localises to the cytoplasm. It carries out the reaction a fatty acyl-[ACP] + phosphate = an acyl phosphate + holo-[ACP]. The protein operates within lipid metabolism; phospholipid metabolism. Functionally, catalyzes the reversible formation of acyl-phosphate (acyl-PO(4)) from acyl-[acyl-carrier-protein] (acyl-ACP). This enzyme utilizes acyl-ACP as fatty acyl donor, but not acyl-CoA. In Shewanella sp. (strain MR-4), this protein is Phosphate acyltransferase.